The primary structure comprises 43 residues: Large ribosomal subunit protein uL11 (43 aa).

Belongs to the universal ribosomal protein uL11 family. Part of the ribosomal stalk of the 50S ribosomal subunit. Interacts with L10 and the large rRNA to form the base of the stalk. L10 forms an elongated spine to which L12 dimers bind in a sequential fashion forming a multimeric L10(L12)X complex. Post-translationally, one or more lysine residues are methylated.

In terms of biological role, forms part of the ribosomal stalk which helps the ribosome interact with GTP-bound translation factors. The chain is Large ribosomal subunit protein uL11 (rplK) from Streptomyces galbus.